We begin with the raw amino-acid sequence, 382 residues long: MRALSILGSTGSIGLSTLDVVRQHRDRFTIVGLAEGHDVAALAAQIEEFKPLAVSVRDAESAKKLQELLGAHKPEVYYGLDGAATIAALDGVDMVVSAIVGAAGLRPTVAAIKAGKHIALANKETLVVAGELVSRLVAEHKVHLLPVDSEHSAIFQSLAGHRAEDVERIILTASGGPFRKTSAEELKQVTLEQALKHPQWSMGAKITIDSATLMNKGLEVIEAHWLFNMPAEKIGVVVHPQSIIHSMVEYIDGCVIAQLGAPDMRAPIAYALSWPERCESGIHKLDLAKIATLTFEEPDMERFPALRLAFDALKAGGTYPAVLNAANEIAVAAFLERKIGFLDIAAMVEKTMQAHEAFTPVELEEYLQVDRWARDTAKTFLP.

Residues Thr-10, Gly-11, Ser-12, Ile-13, Gly-36, and Asn-122 each contribute to the NADPH site. 1-deoxy-D-xylulose 5-phosphate is bound at residue Lys-123. NADPH is bound at residue Glu-124. Residue Asp-148 participates in Mn(2+) binding. Positions 149, 150, 174, and 197 each coordinate 1-deoxy-D-xylulose 5-phosphate. Glu-150 serves as a coordination point for Mn(2+). NADPH is bound at residue Gly-203. 1-deoxy-D-xylulose 5-phosphate is bound by residues Ser-210, Asn-215, Lys-216, and Glu-219. Mn(2+) is bound at residue Glu-219.

This sequence belongs to the DXR family. Mg(2+) is required as a cofactor. The cofactor is Mn(2+).

It catalyses the reaction 2-C-methyl-D-erythritol 4-phosphate + NADP(+) = 1-deoxy-D-xylulose 5-phosphate + NADPH + H(+). The protein operates within isoprenoid biosynthesis; isopentenyl diphosphate biosynthesis via DXP pathway; isopentenyl diphosphate from 1-deoxy-D-xylulose 5-phosphate: step 1/6. In terms of biological role, catalyzes the NADPH-dependent rearrangement and reduction of 1-deoxy-D-xylulose-5-phosphate (DXP) to 2-C-methyl-D-erythritol 4-phosphate (MEP). This Chlorobium chlorochromatii (strain CaD3) protein is 1-deoxy-D-xylulose 5-phosphate reductoisomerase.